Here is a 131-residue protein sequence, read N- to C-terminus: MLIRPNKVQKVGNLFMDTVHEEEIRLLNQLYDTLMKKDVEKADQLMDELLVDLEDHFTTEEELMREFEFFAYPMHKAEHDTMRKRFKEVYDKWKKEKNPEEVVRFLKEEFVPWLKSHVARWDSTTAQQLGD.

Histidine 20, glutamate 23, histidine 56, glutamate 60, histidine 75, histidine 79, histidine 117, and aspartate 122 together coordinate Fe cation.

The protein belongs to the hemerythrin family. As to quaternary structure, monomer.

In terms of biological role, oxygen-binding protein. May be involved in a storage mechanism or for delivery to oxygen-requiring enzymes. The oxygen-binding site contains two iron atoms. This is Bacteriohemerythrin from Aquifex aeolicus (strain VF5).